A 376-amino-acid chain; its full sequence is Phytanoyl-CoA hydroxylase-interacting protein-like (376 aa).

One can recognise a Fibronectin type-III domain in the interval 52 to 161 (VPHNIKISNI…EIIEFCTADY (110 aa)).

Belongs to the PHYHIP family.

Functionally, may play a role in the development of the central system. The polypeptide is Phytanoyl-CoA hydroxylase-interacting protein-like (phyhipl) (Xenopus tropicalis (Western clawed frog)).